A 183-amino-acid chain; its full sequence is MNQDKPYYQIVYAPNDIFKKQAEYIDIVDDNIRTIVDKMLQNLHIERAVGLGANMVGILKRIAVVDLHENNKSSPIVFINPNITYFSEEKQTFIEGSLSFPGIEASITRSKAIKVKYLDYNGNKQELAAEGFLATVIQHEIEYLNGKTFLDSLSKLKRDTLLKKMLKHIKLHPPHIHGSGCRH.

The active site involves glutamate 140.

The protein belongs to the polypeptide deformylase family.

This is Peptide deformylase-like from Rickettsia conorii (strain ATCC VR-613 / Malish 7).